Here is a 190-residue protein sequence, read N- to C-terminus: Abscisic acid receptor PYL2 (190 aa).

The tract at residues 28–182 (FEPDPTTCTS…NLQKLGVAAT (155 aa)) is START-like. Abscisate-binding positions include lysine 64, 93–98 (ASTSTE), 120–126 (RLKNYKS), and glutamate 147. The Gate loop signature appears at 89 to 93 (SGLPA). The Latch loop signature appears at 119–121 (HRL).

Belongs to the PYR/PYL/RCAR abscisic acid intracellular receptor family. Homodimer. Binds ABA on one subunit only. Interacts with HAB1, ABI1 and ABI2, and possibly with other PP2Cs. Binds to CARs protein in an ABA-independent manner, both at the plasma membrane and in the nucleus.

Its subcellular location is the cytoplasm. It is found in the nucleus. The protein localises to the cell membrane. Its function is as follows. Receptor for abscisic acid (ABA) required for ABA-mediated responses such as stomatal closure and germination inhibition. Inhibits the activity of group-A protein phosphatases type 2C (PP2Cs) when activated by ABA. Can be activated by both (-)-ABA and (+)-ABA. The sequence is that of Abscisic acid receptor PYL2 (PYL2) from Arabidopsis thaliana (Mouse-ear cress).